A 277-amino-acid polypeptide reads, in one-letter code: MAIKKFKPTTPSRRFMTVSAFDEITRREPEKSLLAPLKKTGGRNSYGRVTVRHRGGGHKRRYRIIDFKRDKDGVPARVASIEYDPNRSARIALLHYVDGEKRYILAPNKLQVGDTVKSGEDAEIKPGNALKLKNIPVGTIIHNIELKPGKGGQLARAAGTMAQILAKEGKYAHIKLPSGEVRLISLECKATIGQVGNIDHENISIGKAGRKRWLGKRPHVRGVAMNPVDHPHGGGEGRTSTGRHPVTPWGKRTLGKKTRKRKASDKYIIRSRRARKR.

The interval 223 to 277 (VAMNPVDHPHGGGEGRTSTGRHPVTPWGKRTLGKKTRKRKASDKYIIRSRRARKR) is disordered. The span at 253-277 (TLGKKTRKRKASDKYIIRSRRARKR) shows a compositional bias: basic residues.

Belongs to the universal ribosomal protein uL2 family. In terms of assembly, part of the 50S ribosomal subunit. Forms a bridge to the 30S subunit in the 70S ribosome.

In terms of biological role, one of the primary rRNA binding proteins. Required for association of the 30S and 50S subunits to form the 70S ribosome, for tRNA binding and peptide bond formation. It has been suggested to have peptidyltransferase activity; this is somewhat controversial. Makes several contacts with the 16S rRNA in the 70S ribosome. The protein is Large ribosomal subunit protein uL2 of Halothermothrix orenii (strain H 168 / OCM 544 / DSM 9562).